We begin with the raw amino-acid sequence, 88 residues long: MSILSALTSISNPMKSSNSNVANGGSKLSMGANSVACGSCGGGNSSSGIINNSDGSQTTYYTYTSPTYQYGYTYSYGSSFSSSSCGCN.

Positions 1–22 (MSILSALTSISNPMKSSNSNVA) are disordered.

The protein belongs to the hssA/B family.

The chain is HssA/B-like protein 6 (hssl6) from Dictyostelium discoideum (Social amoeba).